Reading from the N-terminus, the 309-residue chain is Serine/threonine-protein phosphatase PP2A catalytic subunit (309 aa).

Residues Asp57, His59, Asp85, and Asn117 each coordinate Mn(2+). His118 functions as the Proton donor in the catalytic mechanism. Mn(2+) is bound by residues His167 and His241.

It belongs to the PPP phosphatase family. PP-2A subfamily. The cofactor is Mn(2+).

The enzyme catalyses O-phospho-L-seryl-[protein] + H2O = L-seryl-[protein] + phosphate. It carries out the reaction O-phospho-L-threonyl-[protein] + H2O = L-threonyl-[protein] + phosphate. The chain is Serine/threonine-protein phosphatase PP2A catalytic subunit from Brassica napus (Rape).